The chain runs to 520 residues: GMP synthase [glutamine-hydrolyzing] (520 aa).

The region spanning 12–205 (KIIVLDYGSQ…AISICGGRGD (194 aa)) is the Glutamine amidotransferase type-1 domain. Cys89 functions as the Nucleophile in the catalytic mechanism. Residues His179 and Glu181 contribute to the active site. Residues 206–395 (WSMDNFIDMQ…LGMPDEVVWR (190 aa)) form the GMPS ATP-PPase domain. 233 to 239 (SGGVDSS) contacts ATP.

Homodimer.

The enzyme catalyses XMP + L-glutamine + ATP + H2O = GMP + L-glutamate + AMP + diphosphate + 2 H(+). It participates in purine metabolism; GMP biosynthesis; GMP from XMP (L-Gln route): step 1/1. Catalyzes the synthesis of GMP from XMP. This is GMP synthase [glutamine-hydrolyzing] from Streptococcus equi subsp. equi (strain 4047).